A 471-amino-acid polypeptide reads, in one-letter code: Coagulation factor IX (471 aa).

Positions 1–19 are cleaved as a signal peptide; it reads MAKIPLILSFCLLEAFLGA. Residues 20 to 39 constitute a propeptide that is removed on maturation; it reads ESTVFIENKEASTVLSRTRR. Residues 40-85 form the Gla domain; the sequence is GNSNRLEELIPGNLERECIEEKCSFEEAREVFENTEKTMEFWKIYI. Residues Asn-41, Glu-46, Glu-47, Glu-54, Glu-56, Glu-59, Glu-60, Glu-65, Glu-66, and Glu-69 each coordinate Ca(2+). Residues Glu-46, Glu-47, Glu-54, Glu-56, Glu-59, Glu-60, Glu-65, Glu-66, Glu-69, Glu-72, Glu-75, and Glu-79 each carry the 4-carboxyglutamate modification. Glu-54 contacts Mg(2+). Cys-57 and Cys-62 are joined by a disulfide. Position 59 (Glu-59) interacts with Mg(2+). Glu-65 contributes to the Mg(2+) binding site. Residue Glu-69 participates in Mg(2+) binding. Positions 75, 79, 86, 87, and 89 each coordinate Ca(2+). 2 residues coordinate Mg(2+): Glu-75 and Glu-79. The 37-residue stretch at 86-122 folds into the EGF-like 1; calcium-binding domain; it reads DGDQCNSNPCKNGAVCKDGVSSYECMCPPGYGGRNCE. 10 disulfide bridges follow: Cys-90–Cys-101, Cys-95–Cys-110, Cys-112–Cys-121, Cys-127–Cys-138, Cys-134–Cys-148, Cys-150–Cys-163, Cys-171–Cys-345, Cys-262–Cys-278, Cys-392–Cys-406, and Cys-417–Cys-445. Ser-92 is a glycosylation site (O-linked (Glc...) serine). A Ca(2+)-binding site is contributed by Asp-103. Asp-103 is subject to (3R)-3-hydroxyaspartate. Position 107 is a phosphoserine (Ser-107). Residues 123 to 164 form the EGF-like 2 domain; that stretch reads IDSTCATKNGGCEHFCRHDTPQKAVCSCASGYKLHEDGKSCK. The propeptide at 186 to 235 is activation peptide; it reads TENTIERWNITAHDEGDAHDEALDITEPPPPPTTSAAPAKIVPITKNDTR. The 234-residue stretch at 236 to 469 folds into the Peptidase S1 domain; sequence VVGGYDSVKG…YVKWIRETTR (234 aa). His-277 functions as the Charge relay system in the catalytic mechanism. Ca(2+) contacts are provided by Glu-291, Asn-293, Glu-296, and Glu-301. The active-site Charge relay system is Asp-325. The active-site Charge relay system is Ser-421.

It belongs to the peptidase S1 family. Heterodimer of a light chain and a heavy chain; disulfide-linked. In terms of processing, activated by factor XIa, which excises the activation peptide. The propeptide can also be removed by snake venom protease. Activated by coagulation factor VIIa-tissue factor (F7-F3) complex in calcium-dependent manner. Post-translationally, the iron and 2-oxoglutarate dependent 3-hydroxylation of aspartate and asparagine is (R) stereospecific within EGF domains.

It is found in the secreted. The catalysed reaction is Selective cleavage of Arg-|-Ile bond in factor X to form factor Xa.. In terms of biological role, factor IX is a vitamin K-dependent plasma protein that participates in the intrinsic pathway of blood coagulation by converting factor X to its active form in the presence of Ca(2+) ions, phospholipids, and factor VIIIa. The polypeptide is Coagulation factor IX (F9) (Gallus gallus (Chicken)).